The primary structure comprises 225 residues: Membrane protein (225 aa).

Topologically, residues 1–20 are virion surface; that stretch reads MSNETNCTLDFEQSVELFKE. Residues 21-41 traverse the membrane as a helical segment; the sequence is YNLFITAFLLFLTIILQYGYA. The Intravirion portion of the chain corresponds to 42-51; sequence TRSKFIYILK. Residues 52–72 traverse the membrane as a helical segment; the sequence is MIVLWCFWPLNIAVGVISCIY. The Virion surface portion of the chain corresponds to 73-77; it reads PPNTG. Residues 78–98 traverse the membrane as a helical segment; it reads GLVAAIILTVFACLSFVGYWI. The Intravirion segment spans residues 99-225; the sequence is QSIRLFKRCR…VATGGSSLYT (127 aa).

The protein belongs to the gammacoronaviruses M protein family. In terms of assembly, homomultimer. Interacts with envelope E protein in the budding compartment of the host cell, which is located between endoplasmic reticulum and the Golgi complex. Forms a complex with HE and S proteins. Interacts with nucleocapsid N protein. This interaction probably participates in RNA packaging into the virus.

The protein resides in the virion membrane. Its subcellular location is the host Golgi apparatus membrane. Component of the viral envelope that plays a central role in virus morphogenesis and assembly via its interactions with other viral proteins. In Gallus gallus (Chicken), this protein is Membrane protein.